The primary structure comprises 529 residues: O-acetylstemmadenine oxidase (529 aa).

The signal sequence occupies residues 1–23 (MIKKVPIVLSIFCFLLLLSSSHG). Cys-32 and Cys-92 form a disulfide bridge. N-linked (GlcNAc...) asparagine glycosylation is present at Asn-52. The 175-residue stretch at 70–244 (KSPKPLAIIT…VSWKVKLVKV (175 aa)) folds into the FAD-binding PCMH-type domain. FAD is bound by residues 102-108 (IRSGGAD), Ser-113, 168-169 (VS), 173-177 (GIGGH), and Phe-183. An N-linked (GlcNAc...) asparagine glycan is attached at Asn-293. An FAD-binding site is contributed by Trp-465.

It belongs to the oxygen-dependent FAD-linked oxidoreductase family. It depends on FAD as a cofactor. Expressed in leaf epidermis.

It is found in the endoplasmic reticulum. The protein resides in the vacuole. The protein localises to the vesicle. The catalysed reaction is O-acetyl-15alpha-stemmadenine + O2 = precondylocarpine acetate + H2O2. Its pathway is alkaloid biosynthesis. In terms of biological role, component of the seco-iridoid and derivatives monoterpenoid indole alkaloids (MIAs, e.g. vinblastine, catharanthine, tabersonine, vincadifformine, vindoline, vincristine, quinine and strychnine) biosynthesis pathway. Converts O-acetylstemmadenine (OAS) to reactive acetylated intermediates, likely dihydroprecondylocarpine acetate. The polypeptide is O-acetylstemmadenine oxidase (Catharanthus roseus (Madagascar periwinkle)).